The primary structure comprises 354 residues: Sulfate permease CysP (354 aa).

The next 8 helical transmembrane spans lie at 3–23 (LAAI…GAAA), 40–60 (ALIL…GEVV), 77–97 (IVCI…LLGI), 125–145 (LIIV…TYFV), 164–184 (ILGI…GMNN), 197–217 (VLDV…GALL), 293–313 (VWIV…SLFL), and 320–340 (IFIM…TKAI).

The protein belongs to the inorganic phosphate transporter (PiT) (TC 2.A.20) family.

Its subcellular location is the cell membrane. Involved in the import of sulfate. This Bacillus subtilis (strain 168) protein is Sulfate permease CysP (cysP).